The following is a 127-amino-acid chain: Small ribosomal subunit protein uS13 (127 aa).

The segment at 95–127 (GLPLRGQRTKTNARTRRGKKGAAIGGKKKATKK) is disordered.

This sequence belongs to the universal ribosomal protein uS13 family. As to quaternary structure, part of the 30S ribosomal subunit. Forms a loose heterodimer with protein S19. Forms two bridges to the 50S subunit in the 70S ribosome.

Functionally, located at the top of the head of the 30S subunit, it contacts several helices of the 16S rRNA. In the 70S ribosome it contacts the 23S rRNA (bridge B1a) and protein L5 of the 50S subunit (bridge B1b), connecting the 2 subunits; these bridges are implicated in subunit movement. Contacts the tRNAs in the A and P-sites. This is Small ribosomal subunit protein uS13 from Herpetosiphon aurantiacus (strain ATCC 23779 / DSM 785 / 114-95).